Here is a 77-residue protein sequence, read N- to C-terminus: Acyl carrier protein (77 aa).

The Carrier domain occupies 1-76; that stretch reads MADFEKIKSI…DVIKFIDKLK (76 aa). At S36 the chain carries O-(pantetheine 4'-phosphoryl)serine.

This sequence belongs to the acyl carrier protein (ACP) family. 4'-phosphopantetheine is transferred from CoA to a specific serine of apo-ACP by AcpS. This modification is essential for activity because fatty acids are bound in thioester linkage to the sulfhydryl of the prosthetic group.

It localises to the cytoplasm. It participates in lipid metabolism; fatty acid biosynthesis. In terms of biological role, carrier of the growing fatty acid chain in fatty acid biosynthesis. The sequence is that of Acyl carrier protein from Leptospira biflexa serovar Patoc (strain Patoc 1 / Ames).